The primary structure comprises 396 residues: MSEFIAENRGANAITRPNWSAVFSVAFCVACLIIVEFLPVSLLTPMAQDLGISEGVAGQSVTVTAFVAMFASLFITQTIQATDRRYVVILFAVLLTLSCLLVSFANSFSLLLIGRACLGLALGGFWAMSASLTMRLVPPRTVPKALSVIFGAVSIALVIAAPLGSFLGELIGWRNVFNAAAAMGVLCIFWIIKSLPSLPGEPSHQKQNTFRLLQRPGVMAGMIAIFMSFAGQFAFFTYIRPVYMNLAGFGVDGLTLVLLSFGIASFVGTSLSSFILKRSVKLALAGAPFVLALSALVLTLWGSYKIVATGVAIIWGLTFALIPVGWSTWITRSLADQAEKAGSIQVAVIQLANTCGAAIGGYALDNIGLTSPLMLSGTLMLLTALLVTAKVKMKKS.

The Cytoplasmic portion of the chain corresponds to 1 to 21 (MSEFIAENRGANAITRPNWSA). A helical transmembrane segment spans residues 22-42 (VFSVAFCVACLIIVEFLPVSL). Over 43-54 (LTPMAQDLGISE) the chain is Periplasmic. Residues 55 to 75 (GVAGQSVTVTAFVAMFASLFI) traverse the membrane as a helical segment. The Cytoplasmic portion of the chain corresponds to 76–85 (TQTIQATDRR). Residues 86–106 (YVVILFAVLLTLSCLLVSFAN) form a helical membrane-spanning segment. Position 107 (S107) is a topological domain, periplasmic. The chain crosses the membrane as a helical span at residues 108–128 (FSLLLIGRACLGLALGGFWAM). The Cytoplasmic portion of the chain corresponds to 129–147 (SASLTMRLVPPRTVPKALS). Residues 148-168 (VIFGAVSIALVIAAPLGSFLG) traverse the membrane as a helical segment. Residues 169-175 (ELIGWRN) lie on the Periplasmic side of the membrane. A helical transmembrane segment spans residues 176–196 (VFNAAAAMGVLCIFWIIKSLP). Over 197 to 215 (SLPGEPSHQKQNTFRLLQR) the chain is Cytoplasmic. A helical transmembrane segment spans residues 216–236 (PGVMAGMIAIFMSFAGQFAFF). At 237–255 (TYIRPVYMNLAGFGVDGLT) the chain is on the periplasmic side. Residues 256-276 (LVLLSFGIASFVGTSLSSFIL) form a helical membrane-spanning segment. The Cytoplasmic segment spans residues 277 to 281 (KRSVK). The helical transmembrane segment at 282 to 302 (LALAGAPFVLALSALVLTLWG) threads the bilayer. Over 303-305 (SYK) the chain is Periplasmic. A helical transmembrane segment spans residues 306–326 (IVATGVAIIWGLTFALIPVGW). Residues 327–343 (STWITRSLADQAEKAGS) lie on the Cytoplasmic side of the membrane. Residues 344–364 (IQVAVIQLANTCGAAIGGYAL) traverse the membrane as a helical segment. The Periplasmic segment spans residues 365–366 (DN). Residues 367-387 (IGLTSPLMLSGTLMLLTALLV) form a helical membrane-spanning segment. Topologically, residues 388–396 (TAKVKMKKS) are cytoplasmic.

Belongs to the major facilitator superfamily. DHA1 family. NepI (TC 2.A.1.2.26) subfamily.

The protein resides in the cell inner membrane. The enzyme catalyses inosine(in) + H(+)(out) = inosine(out) + H(+)(in). The catalysed reaction is guanosine(in) + H(+)(out) = guanosine(out) + H(+)(in). In terms of biological role, involved in the efflux of purine ribonucleosides, such as inosine and guanosine. The chain is Purine ribonucleoside efflux pump NepI from Escherichia coli O6:H1 (strain CFT073 / ATCC 700928 / UPEC).